Consider the following 465-residue polypeptide: Hydroxyacid-oxoacid transhydrogenase, mitochondrial (465 aa).

The protein belongs to the iron-containing alcohol dehydrogenase family. Hydroxyacid-oxoacid transhydrogenase subfamily.

It localises to the mitochondrion. It carries out the reaction (S)-3-hydroxybutanoate + 2-oxoglutarate = (R)-2-hydroxyglutarate + acetoacetate. It catalyses the reaction 4-hydroxybutanoate + 2-oxoglutarate = (R)-2-hydroxyglutarate + succinate semialdehyde. In terms of biological role, catalyzes the cofactor-independent reversible oxidation of gamma-hydroxybutyrate (GHB) to succinic semialdehyde (SSA) coupled to reduction of 2-ketoglutarate (2-KG) to D-2-hydroxyglutarate (D-2-HG). L-3-hydroxybutyrate (L-3-OHB) is also a substrate for HOT when using 2-KG as hydrogen acceptor, resulting in the formation of D-2-HG. The protein is Hydroxyacid-oxoacid transhydrogenase, mitochondrial of Caenorhabditis briggsae.